The following is a 130-amino-acid chain: Small ribosomal subunit protein uS11 (130 aa).

The protein belongs to the universal ribosomal protein uS11 family. As to quaternary structure, part of the 30S ribosomal subunit. Interacts with proteins S7 and S18. Binds to IF-3.

Located on the platform of the 30S subunit, it bridges several disparate RNA helices of the 16S rRNA. Forms part of the Shine-Dalgarno cleft in the 70S ribosome. The chain is Small ribosomal subunit protein uS11 from Lactobacillus helveticus (strain DPC 4571).